Reading from the N-terminus, the 280-residue chain is Thymidylate synthase (280 aa).

A dUMP-binding site is contributed by arginine 21. Histidine 51 contacts (6R)-5,10-methylene-5,6,7,8-tetrahydrofolate. DUMP is bound at residue 142-143 (RR). Residue cysteine 162 is the Nucleophile of the active site. DUMP is bound by residues 182–185 (RSAD), asparagine 193, and 223–225 (HLY). Aspartate 185 is a (6R)-5,10-methylene-5,6,7,8-tetrahydrofolate binding site. Residue alanine 279 coordinates (6R)-5,10-methylene-5,6,7,8-tetrahydrofolate.

It belongs to the thymidylate synthase family. Bacterial-type ThyA subfamily. In terms of assembly, homodimer.

The protein resides in the cytoplasm. It carries out the reaction dUMP + (6R)-5,10-methylene-5,6,7,8-tetrahydrofolate = 7,8-dihydrofolate + dTMP. The protein operates within pyrimidine metabolism; dTTP biosynthesis. Functionally, catalyzes the reductive methylation of 2'-deoxyuridine-5'-monophosphate (dUMP) to 2'-deoxythymidine-5'-monophosphate (dTMP) while utilizing 5,10-methylenetetrahydrofolate (mTHF) as the methyl donor and reductant in the reaction, yielding dihydrofolate (DHF) as a by-product. This enzymatic reaction provides an intracellular de novo source of dTMP, an essential precursor for DNA biosynthesis. This is Thymidylate synthase from Acinetobacter baylyi (strain ATCC 33305 / BD413 / ADP1).